A 1030-amino-acid chain; its full sequence is Exportin-T (1030 aa).

The protein belongs to the exportin family.

The protein resides in the nucleus. It is found in the cytoplasm. In terms of biological role, tRNA nucleus export receptor which facilitates tRNA translocation across the nuclear pore complex. Involved in pre-tRNA splicing, probably by affecting the interaction of pre-tRNA with splicing endonuclease. The chain is Exportin-T (los1) from Aspergillus niger (strain ATCC MYA-4892 / CBS 513.88 / FGSC A1513).